Consider the following 307-residue polypeptide: MNTPWTHTTVLLNEAVEALLSGSTAATGTYVDATFGRGGHARAILARLAPEGRLIAFDKDAEAVAEAARISDARFSIRHQGFRSLGELPDASVAGVLMDLGVSSPQIDNPVRGFSFRFDGPLDMRMDTTRGESVADWLATAELQQIAEVIRDYGEERFAVQIAKAIVARRQERGAISTTSELAELVAGTVKTREPGQNPATRTFQAFRIFINAELEELQQALEASLSVLQPGGRLAVISFHSLEDRIVKQFIARHSKEVYDRRAPFAAPKAMKLRALERIKPSDAEVHGNPRSRSAILRVAERTQEV.

Residues 38–40 (GGH), Asp58, Phe82, Asp99, and Gln106 each bind S-adenosyl-L-methionine.

This sequence belongs to the methyltransferase superfamily. RsmH family.

It localises to the cytoplasm. The enzyme catalyses cytidine(1402) in 16S rRNA + S-adenosyl-L-methionine = N(4)-methylcytidine(1402) in 16S rRNA + S-adenosyl-L-homocysteine + H(+). Functionally, specifically methylates the N4 position of cytidine in position 1402 (C1402) of 16S rRNA. In Variovorax paradoxus (strain S110), this protein is Ribosomal RNA small subunit methyltransferase H.